A 113-amino-acid polypeptide reads, in one-letter code: Hydrogenase maturation factor HybF (113 aa).

Ni(2+)-binding residues include histidine 2 and glutamate 3. 4 residues coordinate Zn(2+): cysteine 73, cysteine 76, cysteine 89, and cysteine 92.

It belongs to the HypA/HybF family. HybF subfamily.

Involved in the maturation of [NiFe] hydrogenases. Required for nickel insertion into the metal center of the hydrogenase. The protein is Hydrogenase maturation factor HybF of Morganella morganii (Proteus morganii).